The following is a 324-amino-acid chain: MKFDRHRRLRSSKTMRDLVRETHVRKEDLIYPIFVVEQDDIKSEIKSLPGIYQISLNLLHEEIKEAYDLGIRAIMFFGVPNDKDDIGSGAYDHNGVVQEATRISKNLYKDLLIVADTCLCEYTDHGHCGVIDDHTHDVDNDKSLPLLVKTAISQVEAGADIIAPSNMMDGFVAEIREGLDQAGYQNIPIMSYGIKYASSFFGPFRDAADSAPSFGDRKTYQMDPANRLEALRELESDLKEGCDMMIVKPSLSYLDIIRDVKNNTNVPVVAYNVSGEYSMTKAAALNGWIDEEKIVMEQMISMKRAGADLIITYFAKDICRYLDK.

Zn(2+) contacts are provided by Cys118, Cys120, and Cys128. Lys195 functions as the Schiff-base intermediate with substrate in the catalytic mechanism. 5-aminolevulinate-binding residues include Arg205 and Arg217. Glu233 is a Mg(2+) binding site. The Schiff-base intermediate with substrate role is filled by Lys248. 5-aminolevulinate is bound by residues Ser274 and Tyr313.

It belongs to the ALAD family. In terms of assembly, homooctamer. It depends on Zn(2+) as a cofactor.

The enzyme catalyses 2 5-aminolevulinate = porphobilinogen + 2 H2O + H(+). The protein operates within porphyrin-containing compound metabolism; protoporphyrin-IX biosynthesis; coproporphyrinogen-III from 5-aminolevulinate: step 1/4. Catalyzes an early step in the biosynthesis of tetrapyrroles. Binds two molecules of 5-aminolevulinate per subunit, each at a distinct site, and catalyzes their condensation to form porphobilinogen. In Staphylococcus epidermidis (strain ATCC 12228 / FDA PCI 1200), this protein is Delta-aminolevulinic acid dehydratase (hemB).